Reading from the N-terminus, the 283-residue chain is Elongation factor Ts (283 aa).

The involved in Mg(2+) ion dislocation from EF-Tu stretch occupies residues 80–83 (TDFV).

Belongs to the EF-Ts family.

The protein resides in the cytoplasm. Associates with the EF-Tu.GDP complex and induces the exchange of GDP to GTP. It remains bound to the aminoacyl-tRNA.EF-Tu.GTP complex up to the GTP hydrolysis stage on the ribosome. The chain is Elongation factor Ts from Serratia proteamaculans (strain 568).